The sequence spans 165 residues: UPF0303 protein BMA1246 (165 aa).

The protein belongs to the UPF0303 family.

This chain is UPF0303 protein BMA1246, found in Burkholderia mallei (strain ATCC 23344).